A 249-amino-acid chain; its full sequence is Deoxyribose-phosphate aldolase (249 aa).

D105 (proton donor/acceptor) is an active-site residue. Residue K168 is the Schiff-base intermediate with acetaldehyde of the active site. Residue K216 is the Proton donor/acceptor of the active site.

The protein belongs to the DeoC/FbaB aldolase family. DeoC type 1 subfamily.

Its subcellular location is the cytoplasm. It carries out the reaction 2-deoxy-D-ribose 5-phosphate = D-glyceraldehyde 3-phosphate + acetaldehyde. It participates in carbohydrate degradation; 2-deoxy-D-ribose 1-phosphate degradation; D-glyceraldehyde 3-phosphate and acetaldehyde from 2-deoxy-alpha-D-ribose 1-phosphate: step 2/2. Catalyzes a reversible aldol reaction between acetaldehyde and D-glyceraldehyde 3-phosphate to generate 2-deoxy-D-ribose 5-phosphate. The sequence is that of Deoxyribose-phosphate aldolase from Corynebacterium jeikeium (strain K411).